We begin with the raw amino-acid sequence, 100 residues long: Trp operon repressor homolog (100 aa).

A DNA-binding region spans residues 59–82; the sequence is QRQISQMLGVGIATITRGSNELKS. A compositionally biased stretch (basic and acidic residues) spans 78–93; sequence NELKSKSDTDKDKLKT. The segment at 78 to 100 is disordered; it reads NELKSKSDTDKDKLKTLLEQGAQ.

The protein belongs to the TrpR family. In terms of assembly, homodimer.

The protein localises to the cytoplasm. Its function is as follows. This protein is an aporepressor. When complexed with L-tryptophan it binds the operator region of the trp operon and prevents the initiation of transcription. This chain is Trp operon repressor homolog, found in Vibrio campbellii (strain ATCC BAA-1116).